The sequence spans 541 residues: Glucose-6-phosphate isomerase (541 aa).

E354 acts as the Proton donor in catalysis. Residues H385 and K505 contribute to the active site.

Belongs to the GPI family.

The protein localises to the cytoplasm. The catalysed reaction is alpha-D-glucose 6-phosphate = beta-D-fructose 6-phosphate. The protein operates within carbohydrate biosynthesis; gluconeogenesis. Its pathway is carbohydrate degradation; glycolysis; D-glyceraldehyde 3-phosphate and glycerone phosphate from D-glucose: step 2/4. In terms of biological role, catalyzes the reversible isomerization of glucose-6-phosphate to fructose-6-phosphate. The polypeptide is Glucose-6-phosphate isomerase (Cupriavidus metallidurans (strain ATCC 43123 / DSM 2839 / NBRC 102507 / CH34) (Ralstonia metallidurans)).